We begin with the raw amino-acid sequence, 179 residues long: Orotate phosphoribosyltransferase (179 aa).

5-phospho-alpha-D-ribose 1-diphosphate-binding positions include arginine 94, lysine 95, lysine 98, histidine 100, and 120 to 128 (EDTSTTGNS). 2 residues coordinate orotate: threonine 124 and arginine 152.

The protein belongs to the purine/pyrimidine phosphoribosyltransferase family. PyrE subfamily. Homodimer. It depends on Mg(2+) as a cofactor.

It carries out the reaction orotidine 5'-phosphate + diphosphate = orotate + 5-phospho-alpha-D-ribose 1-diphosphate. It functions in the pathway pyrimidine metabolism; UMP biosynthesis via de novo pathway; UMP from orotate: step 1/2. Functionally, catalyzes the transfer of a ribosyl phosphate group from 5-phosphoribose 1-diphosphate to orotate, leading to the formation of orotidine monophosphate (OMP). The chain is Orotate phosphoribosyltransferase from Mycobacterium bovis (strain ATCC BAA-935 / AF2122/97).